A 312-amino-acid polypeptide reads, in one-letter code: Ribosomal protein L11 methyltransferase (312 aa).

The S-adenosyl-L-methionine site is built by T160, G181, D203, and N246.

It belongs to the methyltransferase superfamily. PrmA family.

The protein localises to the cytoplasm. It carries out the reaction L-lysyl-[protein] + 3 S-adenosyl-L-methionine = N(6),N(6),N(6)-trimethyl-L-lysyl-[protein] + 3 S-adenosyl-L-homocysteine + 3 H(+). Functionally, methylates ribosomal protein L11. In Staphylococcus carnosus (strain TM300), this protein is Ribosomal protein L11 methyltransferase.